The sequence spans 228 residues: uncharacterized protein (228 aa).

Positions valine 196–glycine 228 form a coiled coil.

This is an uncharacterized protein from Acanthamoeba polyphaga (Amoeba).